Reading from the N-terminus, the 191-residue chain is Protein Ves (191 aa).

It belongs to the Ves family.

This Shigella flexneri protein is Protein Ves.